A 1195-amino-acid polypeptide reads, in one-letter code: DNA-directed RNA polymerase subunit Rpo2 (1195 aa).

Residues 894-909 (LEEGEERLGPQRRRES) are compositionally biased toward basic and acidic residues. A disordered region spans residues 894 to 914 (LEEGEERLGPQRRRESSVTMR). 4 residues coordinate Zn(2+): Cys-1135, Cys-1140, Cys-1155, and Cys-1158.

This sequence belongs to the RNA polymerase beta chain family. Part of the RNA polymerase complex. Zn(2+) serves as cofactor.

The protein localises to the cytoplasm. It catalyses the reaction RNA(n) + a ribonucleoside 5'-triphosphate = RNA(n+1) + diphosphate. DNA-dependent RNA polymerase (RNAP) catalyzes the transcription of DNA into RNA using the four ribonucleoside triphosphates as substrates. This subunit is involved in DNA promoter recognition. The protein is DNA-directed RNA polymerase subunit Rpo2 of Thermoplasma acidophilum (strain ATCC 25905 / DSM 1728 / JCM 9062 / NBRC 15155 / AMRC-C165).